We begin with the raw amino-acid sequence, 449 residues long: tRNA (guanine(37)-N(1))-methyltransferase (449 aa).

S-adenosyl-L-methionine is bound by residues histidine 216, 254–255 (DL), 282–283 (DG), and asparagine 345.

It belongs to the class I-like SAM-binding methyltransferase superfamily. TRM5/TYW2 family. Monomer.

The protein resides in the mitochondrion matrix. The protein localises to the nucleus. Its subcellular location is the cytoplasm. It carries out the reaction guanosine(37) in tRNA + S-adenosyl-L-methionine = N(1)-methylguanosine(37) in tRNA + S-adenosyl-L-homocysteine + H(+). Its function is as follows. Specifically methylates the N1 position of guanosine-37 in various cytoplasmic and mitochondrial tRNAs. Methylation is not dependent on the nature of the nucleoside 5' of the target nucleoside. This is the first step in the biosynthesis of wybutosine (yW), a modified base adjacent to the anticodon of tRNAs and required for accurate decoding. The chain is tRNA (guanine(37)-N(1))-methyltransferase from Candida albicans (strain SC5314 / ATCC MYA-2876) (Yeast).